The sequence spans 231 residues: 2-phospho-L-lactate guanylyltransferase (231 aa).

Belongs to the CofC family. Homodimer.

It catalyses the reaction (2S)-2-phospholactate + GTP + H(+) = (2S)-lactyl-2-diphospho-5'-guanosine + diphosphate. It functions in the pathway cofactor biosynthesis; coenzyme F420 biosynthesis. Guanylyltransferase that catalyzes the activation of (2S)-2-phospholactate (2-PL) as (2S)-lactyl-2-diphospho-5'-guanosine, via the condensation of 2-PL with GTP. It is involved in the biosynthesis of coenzyme F420, a hydride carrier cofactor. This Haloterrigena turkmenica (strain ATCC 51198 / DSM 5511 / JCM 9101 / NCIMB 13204 / VKM B-1734 / 4k) (Halococcus turkmenicus) protein is 2-phospho-L-lactate guanylyltransferase.